Reading from the N-terminus, the 535-residue chain is Glucans biosynthesis protein D 1 (535 aa).

Positions 1–28 (MHRRDLLKQLAAGFLALAPGLTPSTASA) form a signal peptide, tat-type signal. The tract at residues 275–287 (RTDRAGDRQSAAR) is insert.

This sequence belongs to the OpgD/OpgG family. Post-translationally, predicted to be exported by the Tat system. The position of the signal peptide cleavage has not been experimentally proven.

It is found in the periplasm. It functions in the pathway glycan metabolism; osmoregulated periplasmic glucan (OPG) biosynthesis. Probably involved in the control of the structural glucose backbone of osmoregulated periplasmic glucans (OPGs). The sequence is that of Glucans biosynthesis protein D 1 (opgD1) from Ralstonia nicotianae (strain ATCC BAA-1114 / GMI1000) (Ralstonia solanacearum).